The sequence spans 152 residues: Large ribosomal subunit protein bL9 (152 aa).

It belongs to the bacterial ribosomal protein bL9 family.

In terms of biological role, binds to the 23S rRNA. This is Large ribosomal subunit protein bL9 from Synechococcus sp. (strain CC9311).